Reading from the N-terminus, the 1086-residue chain is Endo-1,4-beta-xylanase C (1086 aa).

A signal peptide spans Met1 to Ala31. CBM-cenC domains lie at Gly35–Val183 and Gly197–Thr359. A GH10 domain is found at Glu365–Pro710. The active-site Proton donor is Glu502. Residue Asp556 is part of the active site. The Nucleophile role is filled by Glu620.

It belongs to the glycosyl hydrolase 10 (cellulase F) family.

It carries out the reaction Endohydrolysis of (1-&gt;4)-beta-D-xylosidic linkages in xylans.. The protein operates within glycan degradation; xylan degradation. Its function is as follows. Endoxylanase with high hydrolytic activity on birchwood and oat spelt xylan. Xylotetraose, xylotriose, xylobiose and xylose are the main products from birchwood xylan hydrolysis. Shows increasing activity on xylo-oligosaccharides of increasing length. Displays very low hydrolytic activity on Avicel, carboxymethylcellulose (CMC) and p-nitrophenyl-beta-xylopyranoside. Also shows transxylosidase activity, allowing the formation of xylo-oligosaccharides of higher degree of polymerization than the starting substrate. This Paenibacillus barcinonensis protein is Endo-1,4-beta-xylanase C (xynC).